The chain runs to 254 residues: Isoprenyl transferase (254 aa).

Residue D12 is part of the active site. Position 12 (D12) interacts with Mg(2+). Substrate-binding positions include 13 to 16 (GNGR), W17, R25, H29, and 57 to 59 (SSE). The active-site Proton acceptor is N60. Substrate is bound by residues W61, R63, R180, and 186–188 (RLS). E199 is a binding site for Mg(2+).

The protein belongs to the UPP synthase family. As to quaternary structure, homodimer. The cofactor is Mg(2+).

Functionally, catalyzes the condensation of isopentenyl diphosphate (IPP) with allylic pyrophosphates generating different type of terpenoids. This Brucella suis biovar 1 (strain 1330) protein is Isoprenyl transferase.